We begin with the raw amino-acid sequence, 293 residues long: ELMO domain-containing protein 2 (293 aa).

Residues 126–282 form the ELMO domain; that stretch reads QHEKLLIKLW…KFHEKIKGLL (157 aa).

Functionally, acts as a GTPase-activating protein (GAP) toward guanine nucleotide exchange factors like ARL2, ARL3, ARF1 and ARF6, but not for GTPases outside the Arf family. The chain is ELMO domain-containing protein 2 (ELMOD2) from Bos taurus (Bovine).